Here is a 217-residue protein sequence, read N- to C-terminus: Cytidylate kinase (217 aa).

Position 10–18 (10–18) interacts with ATP; that stretch reads GPAGAGKST.

The protein belongs to the cytidylate kinase family. Type 1 subfamily.

It localises to the cytoplasm. It carries out the reaction CMP + ATP = CDP + ADP. The enzyme catalyses dCMP + ATP = dCDP + ADP. The sequence is that of Cytidylate kinase from Alkaliphilus oremlandii (strain OhILAs) (Clostridium oremlandii (strain OhILAs)).